We begin with the raw amino-acid sequence, 980 residues long: Macrophage colony-stimulating factor 1 receptor (980 aa).

The first 19 residues, M1–G19, serve as a signal peptide directing secretion. Residues V20–P514 are Extracellular-facing. Ig-like C2-type domains follow at residues P21 to Y100, P107 to K197, P202 to E297, A299 to R397, and P400 to S499. Residues C42 and C84 are joined by a disulfide bond. N45, N73, N94, N153, N275, N286, N302, N335, N410, N477, and N490 each carry an N-linked (GlcNAc...) asparagine glycan. 2 disulfides stabilise this stretch: C127-C177 and C224-C278. C417 and C482 are joined by a disulfide. Residues V515–Y535 form a helical membrane-spanning segment. At K536–C980 the chain is on the cytoplasmic side. A regulatory juxtamembrane domain region spans residues Q539–K571. Phosphotyrosine; by autocatalysis is present on residues Y543 and Y558. In terms of domain architecture, Protein kinase spans L579–L908. ATP-binding positions include L585–V593 and K613. 2 positions are modified to phosphotyrosine; by autocatalysis: Y696 and Y705. Residue S710 is modified to Phosphoserine. Y720 carries the post-translational modification Phosphotyrosine; by autocatalysis. The disordered stretch occupies residues M723 to E743. D776 acts as the Proton acceptor in catalysis. Residues D794–P816 are activation loop. A phosphotyrosine; by autocatalysis mark is found at Y807 and Y921. A disordered region spans residues V918 to L959. Low complexity predominate over residues S926–T940. Residue Y977 is modified to Phosphotyrosine; by autocatalysis.

This sequence belongs to the protein kinase superfamily. Tyr protein kinase family. CSF-1/PDGF receptor subfamily. Monomer. Homodimer. Interacts with CSF1 and IL34. Interaction with dimeric CSF1 or IL34 leads to receptor homodimerization. Interacts with INPPL1/SHIP2 and THOC5. Interacts (tyrosine phosphorylated) with PLCG2 (via SH2 domain). Interacts (tyrosine phosphorylated) with PIK3R1 (via SH2 domain). Interacts (tyrosine phosphorylated) with FYN, YES1 and SRC (via SH2 domain). Interacts (tyrosine phosphorylated) with CBL, GRB2 and SLA2. Post-translationally, autophosphorylated in response to CSF1 or IL34 binding. Phosphorylation at Tyr-558 is important for normal down-regulation of signaling by ubiquitination, internalization and degradation. Phosphorylation at Tyr-558 and Tyr-807 is important for interaction with SRC family members, including FYN, YES1 and SRC, and for subsequent activation of these protein kinases. Phosphorylation at Tyr-696 and Tyr-921 is important for interaction with GRB2. Phosphorylation at Tyr-720 is important for interaction with PIK3R1. Phosphorylation at Tyr-720 and Tyr-807 is important for interaction with PLCG2. Phosphorylation at Tyr-977 is important for interaction with CBL. Dephosphorylation by PTPN2 negatively regulates downstream signaling and macrophage differentiation. In terms of processing, ubiquitinated. Becomes rapidly polyubiquitinated after autophosphorylation, leading to its degradation.

It is found in the cell membrane. It carries out the reaction L-tyrosyl-[protein] + ATP = O-phospho-L-tyrosyl-[protein] + ADP + H(+). Present in an inactive conformation in the absence of bound ligand. CSF1 or IL34 binding leads to dimerization and activation by autophosphorylation on tyrosine residues. Tyrosine-protein kinase that acts as a cell-surface receptor for CSF1 and IL34 and plays an essential role in the regulation of survival, proliferation and differentiation of hematopoietic precursor cells, especially mononuclear phagocytes, such as macrophages and monocytes. Promotes the release of pro-inflammatory chemokines in response to IL34 and CSF1, and thereby plays an important role in innate immunity and in inflammatory processes. Plays an important role in the regulation of osteoclast proliferation and differentiation, the regulation of bone resorption, and is required for normal bone and tooth development. Required for normal male and female fertility, and for normal development of milk ducts and acinar structures in the mammary gland during pregnancy. Promotes reorganization of the actin cytoskeleton, regulates formation of membrane ruffles, cell adhesion and cell migration, and promotes cancer cell invasion. Activates several signaling pathways in response to ligand binding, including the ERK1/2 and the JNK pathway. Phosphorylates PIK3R1, PLCG2, GRB2, SLA2 and CBL. Activation of PLCG2 leads to the production of the cellular signaling molecules diacylglycerol and inositol 1,4,5-trisphosphate, that then lead to the activation of protein kinase C family members, especially PRKCD. Phosphorylation of PIK3R1, the regulatory subunit of phosphatidylinositol 3-kinase, leads to activation of the AKT1 signaling pathway. Activated CSF1R also mediates activation of the MAP kinases MAPK1/ERK2 and/or MAPK3/ERK1, and of the SRC family kinases SRC, FYN and YES1. Activated CSF1R transmits signals both via proteins that directly interact with phosphorylated tyrosine residues in its intracellular domain, or via adapter proteins, such as GRB2. Promotes activation of STAT family members STAT3, STAT5A and/or STAT5B. Promotes tyrosine phosphorylation of SHC1 and INPP5D/SHIP-1. Receptor signaling is down-regulated by protein phosphatases, such as INPP5D/SHIP-1, that dephosphorylate the receptor and its downstream effectors, and by rapid internalization of the activated receptor. In the central nervous system, may play a role in the development of microglia macrophages. The sequence is that of Macrophage colony-stimulating factor 1 receptor (CSF1R) from Felis catus (Cat).